Reading from the N-terminus, the 24-residue chain is Positive regulator of RepFIC repA1 expression (24 aa).

The chain is Positive regulator of RepFIC repA1 expression (repL) from Escherichia coli (strain K12).